The sequence spans 430 residues: Glutamyl-tRNA reductase (430 aa).

Substrate-binding positions include Thr50 to Arg53, Ser108, Glu113 to Gln115, and Gln119. The Nucleophile role is filled by Cys51. Gly188–Ala193 lines the NADP(+) pocket.

The protein belongs to the glutamyl-tRNA reductase family. Homodimer.

The enzyme catalyses (S)-4-amino-5-oxopentanoate + tRNA(Glu) + NADP(+) = L-glutamyl-tRNA(Glu) + NADPH + H(+). Its pathway is porphyrin-containing compound metabolism; protoporphyrin-IX biosynthesis; 5-aminolevulinate from L-glutamyl-tRNA(Glu): step 1/2. In terms of biological role, catalyzes the NADPH-dependent reduction of glutamyl-tRNA(Glu) to glutamate 1-semialdehyde (GSA). In Lawsonia intracellularis (strain PHE/MN1-00), this protein is Glutamyl-tRNA reductase.